The chain runs to 421 residues: Mannose-1-phosphate guanylyltransferase regulatory subunit alpha (421 aa).

The interval 2–252 (LKAVILIGGP…EGCWSQIKSA (251 aa)) is substrate-binding domain. The GDP-alpha-D-mannose site is built by Glu85 and Gln248. Residues 274–421 (LASTKEGGPT…SRSFKNQIIL (148 aa)) form a hexapeptide repeat domain region. Positions 357–385 (TPSDPNPNDPYSKIDSETLFREGKLTPSI) are C-loop.

Belongs to the transferase hexapeptide repeat family. In terms of assembly, component of the GMPPA-GMPPB mannose-1-phosphate guanylyltransferase complex composed of 4 gmppa subunits and 8 gmppb subunits; the complex is organized into three layers, a central layer made up of 2 gmppa dimers sandwiched between two layers each made up of 2 gmppb dimers.

It is found in the cytoplasm. Functionally, regulatory subunit of the GMPPA-GMPPB mannose-1-phosphate guanylyltransferase complex; reduces the catalytic activity of GMPPB when part of the complex. Mediates allosteric feedback inhibition of GMPPB catalytic activity upon binding GDP-alpha-D-mannose. Together with GMPPB regulates GDP-alpha-D-mannose levels. The protein is Mannose-1-phosphate guanylyltransferase regulatory subunit alpha (gmppa) of Xenopus tropicalis (Western clawed frog).